We begin with the raw amino-acid sequence, 236 residues long: H2HPP isomerase (236 aa).

Cupin type-1 domains follow at residues 40 to 106 (YVPP…AIDI) and 151 to 215 (NIPG…SKSV). Residues H50, H52, Q56, H91, H162, H164, Q168, and H202 each coordinate a divalent metal cation. Position 223 (Y223) interacts with substrate.

As to quaternary structure, monomer. Fe(2+) serves as cofactor. Co(2+) is required as a cofactor.

The protein resides in the cytoplasm. It catalyses the reaction 3-[(4R)-4-hydroxycyclohexa-1,5-dien-1-yl]-2-oxopropanoate = 3-[(1E,4R)-4-hydroxycyclohex-2-en-1-ylidene]pyruvate. Its pathway is antibiotic biosynthesis; bacilysin biosynthesis. Functionally, part of the bacABCDEF operon responsible for the biosynthesis of the nonribosomally synthesized dipeptide antibiotic bacilysin, composed of L-alanine and L-anticapsin. Bacilysin is an irreversible inactivator of the glutaminase domain of glucosamine synthetase. BacB catalyzes the allylic isomerization of the endocyclic-delta(4),delta(8)-7R-dihydro-hydroxyphenylpyruvate (en-H2HPP) to generate a mixture of 3E,7R- and 3Z, 7R-olefins of the exocyclic-delta(3),delta(5)-dihydro-hydroxyphenylpyruvate (ex-H2HPP). The chain is H2HPP isomerase from Bacillus subtilis.